The primary structure comprises 77 residues: Conotoxin King-Kong 1 (77 aa).

The N-terminal stretch at 1 to 22 (MKLTCMMIVAVLFLTAWTFATA) is a signal peptide. A propeptide spanning residues 23-49 (DDSSNGLENLFSKAHHEMKNPEASKLN) is cleaved from the precursor. Disulfide bonds link Cys-52–Cys-67, Cys-59–Cys-71, and Cys-66–Cys-76. Met-61 carries the methionine sulfoxide; partial modification.

This sequence belongs to the conotoxin O1 superfamily. As to expression, expressed by the venom duct.

It is found in the secreted. In Conus textile (Cloth-of-gold cone), this protein is Conotoxin King-Kong 1.